The sequence spans 151 residues: Ribonuclease H (151 aa).

The RNase H type-1 domain maps to 1–146; it reads MPDLYAYTDG…ADELARAGMA (146 aa). 4 residues coordinate Mg(2+): Asp9, Glu52, Asp74, and Asp138.

Belongs to the RNase H family. Monomer. The cofactor is Mg(2+).

Its subcellular location is the cytoplasm. The enzyme catalyses Endonucleolytic cleavage to 5'-phosphomonoester.. Functionally, endonuclease that specifically degrades the RNA of RNA-DNA hybrids. The polypeptide is Ribonuclease H (Cereibacter sphaeroides (strain ATCC 17029 / ATH 2.4.9) (Rhodobacter sphaeroides)).